A 302-amino-acid chain; its full sequence is UDP-3-O-acyl-N-acetylglucosamine deacetylase (302 aa).

Zn(2+) is bound by residues His-78, His-235, and Asp-239. Residue His-262 is the Proton donor of the active site.

This sequence belongs to the LpxC family. It depends on Zn(2+) as a cofactor.

The catalysed reaction is a UDP-3-O-[(3R)-3-hydroxyacyl]-N-acetyl-alpha-D-glucosamine + H2O = a UDP-3-O-[(3R)-3-hydroxyacyl]-alpha-D-glucosamine + acetate. It functions in the pathway glycolipid biosynthesis; lipid IV(A) biosynthesis; lipid IV(A) from (3R)-3-hydroxytetradecanoyl-[acyl-carrier-protein] and UDP-N-acetyl-alpha-D-glucosamine: step 2/6. Functionally, catalyzes the hydrolysis of UDP-3-O-myristoyl-N-acetylglucosamine to form UDP-3-O-myristoylglucosamine and acetate, the committed step in lipid A biosynthesis. This is UDP-3-O-acyl-N-acetylglucosamine deacetylase from Bdellovibrio bacteriovorus (strain ATCC 15356 / DSM 50701 / NCIMB 9529 / HD100).